Here is a 211-residue protein sequence, read N- to C-terminus: Large ribosomal subunit protein bL25 (211 aa).

Positions 186–211 are disordered; that stretch reads GRALQSMDAAESAVEQPGEQPATAAG.

This sequence belongs to the bacterial ribosomal protein bL25 family. CTC subfamily. Part of the 50S ribosomal subunit; part of the 5S rRNA/L5/L18/L25 subcomplex. Contacts the 5S rRNA. Binds to the 5S rRNA independently of L5 and L18.

This is one of the proteins that binds to the 5S RNA in the ribosome where it forms part of the central protuberance. This is Large ribosomal subunit protein bL25 from Gloeobacter violaceus (strain ATCC 29082 / PCC 7421).